An 88-amino-acid chain; its full sequence is Pape peptide (88 aa).

Residues 1 to 22 (MNRKTLLVIFFVTLLIAEEVNS) form the signal peptide. The propeptide occupies 23–45 (FRLGGFLKKIWRSKLVKRLRSKG). Residues 49–88 (LKEALAPEPAPEPAPEPAPEAAPEAAPEPAAAAPERRRRR) form a disordered region. The span at 56–68 (EPAPEPAPEPAPE) shows a compositional bias: pro residues. 3 PAPE repeats span residues 57 to 60 (PAPE), 61 to 64 (PAPE), and 65 to 68 (PAPE). The span at 69-81 (AAPEAAPEPAAAA) shows a compositional bias: low complexity.

As to expression, expressed by the venom gland.

The protein resides in the secreted. This is Pape peptide from Tityus serrulatus (Brazilian scorpion).